A 194-amino-acid polypeptide reads, in one-letter code: Putative manganese efflux pump MntP (194 aa).

6 helical membrane passes run proline 3–glycine 23, leucine 37–leucine 57, aspartate 69–leucine 89, leucine 110–phenylalanine 132, cysteine 147–glycine 167, and isoleucine 172–alanine 192.

It belongs to the MntP (TC 9.B.29) family.

The protein resides in the cell inner membrane. Functionally, probably functions as a manganese efflux pump. The chain is Putative manganese efflux pump MntP from Xanthomonas oryzae pv. oryzae (strain MAFF 311018).